A 581-amino-acid chain; its full sequence is Pentatricopeptide repeat-containing protein At3g56550 (581 aa).

PPR repeat units lie at residues 70–104 (STSDWNYLIRGFSNSSSPLNSILFYNRMLLSSVSR), 106–140 (DLFTFNFALKSCERIKSIPKCLEIHGSVIRSGFLD), 141–171 (DAIVATSLVRCYSANGSVEIASKVFDEMPVR), 172–206 (DLVSWNVMICCFSHVGLHNQALSMYKRMGNEGVCG), 207–241 (DSYTLVALLSSCAHVSALNMGVMLHRIACDIRCES), 242–272 (CVFVSNALIDMYAKCGSLENAIGVFNGMRKR), 273–307 (DVLTWNSMIIGYGVHGHGVEAISFFRKMVASGVRP), 308–338 (NAITFLGLLLGCSHQGLVKEGVEHFEIMSSQ), and 344–378 (NVKHYGCMVDLYGRAGQLENSLEMIYASSCHEDPV). The tract at residues 379–454 (LWRTLLGSCK…VPGWSWIEIG (76 aa)) is type E motif. Positions 455-485 (DQVHKFVVDDKMHPESAVIYSELGEVINRAI) are type E(+) motif. The segment at 486–581 (LAGYKPEDSN…DGICSCNDYW (96 aa)) is type DYW motif.

Belongs to the PPR family. PCMP-H subfamily.

The polypeptide is Pentatricopeptide repeat-containing protein At3g56550 (PCMP-H80) (Arabidopsis thaliana (Mouse-ear cress)).